The following is a 376-amino-acid chain: Carbamoyl phosphate synthase small chain (376 aa).

The segment at Met-1–Gln-187 is CPSase. Residues Ser-45, Gly-239, and Gly-241 each contribute to the L-glutamine site. One can recognise a Glutamine amidotransferase type-1 domain in the interval Lys-189–Cys-376. Residue Cys-266 is the Nucleophile of the active site. L-glutamine-binding residues include Leu-267, Gln-270, Asn-308, Gly-310, and Phe-311. Residues His-349 and Glu-351 contribute to the active site.

The protein belongs to the CarA family. As to quaternary structure, composed of two chains; the small (or glutamine) chain promotes the hydrolysis of glutamine to ammonia, which is used by the large (or ammonia) chain to synthesize carbamoyl phosphate. Tetramer of heterodimers (alpha,beta)4.

It carries out the reaction hydrogencarbonate + L-glutamine + 2 ATP + H2O = carbamoyl phosphate + L-glutamate + 2 ADP + phosphate + 2 H(+). It catalyses the reaction L-glutamine + H2O = L-glutamate + NH4(+). It participates in amino-acid biosynthesis; L-arginine biosynthesis; carbamoyl phosphate from bicarbonate: step 1/1. Its pathway is pyrimidine metabolism; UMP biosynthesis via de novo pathway; (S)-dihydroorotate from bicarbonate: step 1/3. Its function is as follows. Small subunit of the glutamine-dependent carbamoyl phosphate synthetase (CPSase). CPSase catalyzes the formation of carbamoyl phosphate from the ammonia moiety of glutamine, carbonate, and phosphate donated by ATP, constituting the first step of 2 biosynthetic pathways, one leading to arginine and/or urea and the other to pyrimidine nucleotides. The small subunit (glutamine amidotransferase) binds and cleaves glutamine to supply the large subunit with the substrate ammonia. The chain is Carbamoyl phosphate synthase small chain from Lawsonia intracellularis (strain PHE/MN1-00).